A 765-amino-acid chain; its full sequence is Probable dipeptidyl peptidase 4 (765 aa).

Positions 1–14 (MKWSILLLVGCAAA) are cleaved as a signal peptide. Residues asparagine 35, asparagine 78, asparagine 101, asparagine 110, asparagine 169, asparagine 218, asparagine 465, and asparagine 490 are each glycosylated (N-linked (GlcNAc...) asparagine). Serine 613 functions as the Charge relay system in the catalytic mechanism. N-linked (GlcNAc...) asparagine glycosylation is present at asparagine 665. Catalysis depends on charge relay system residues aspartate 690 and histidine 725.

It belongs to the peptidase S9B family.

It is found in the secreted. It carries out the reaction Release of an N-terminal dipeptide, Xaa-Yaa-|-Zaa-, from a polypeptide, preferentially when Yaa is Pro, provided Zaa is neither Pro nor hydroxyproline.. In terms of biological role, extracellular dipeptidyl-peptidase which removes N-terminal dipeptides sequentially from polypeptides having unsubstituted N-termini provided that the penultimate residue is proline. Contributes to pathogenicity. The chain is Probable dipeptidyl peptidase 4 (dpp4) from Aspergillus fumigatus (strain CBS 144.89 / FGSC A1163 / CEA10) (Neosartorya fumigata).